The primary structure comprises 76 residues: Putative membrane protein insertion efficiency factor (76 aa).

This sequence belongs to the UPF0161 family.

It localises to the cell inner membrane. Could be involved in insertion of integral membrane proteins into the membrane. The protein is Putative membrane protein insertion efficiency factor of Anaeromyxobacter dehalogenans (strain 2CP-C).